A 313-amino-acid chain; its full sequence is Uracil-DNA glycosylase (313 aa).

Over residues 1 to 12 (MIGQKTLYSFFS) the composition is skewed to polar residues. Residues 1 to 25 (MIGQKTLYSFFSPSPARKRHAPSPE) form an interaction with FAM72A region. The tract at residues 1 to 29 (MIGQKTLYSFFSPSPARKRHAPSPEPAVQ) is mitochondrial localization signal. Positions 1–68 (MIGQKTLYSF…GTPPSSPLSA (68 aa)) are disordered. 2 positions are modified to phosphoserine: S12 and S14. The Important for nuclear sorting motif lies at 17 to 19 (RKR). A Phosphoserine modification is found at S23. A compositionally biased stretch (low complexity) spans 43–53 (AAAIPAKKAPA). T60 is subject to Phosphothreonine. S64 is modified (phosphoserine). The interval 73-88 (RIQRNKAAALLRLAAR) is interaction with RPA2. Position 153 (Q153) interacts with uracil. Residue D154 is the Proton acceptor of the active site. H157 lines the dsDNA pocket. F167 lines the uracil pocket. S178 is a binding site for dsDNA. N213 contacts uracil. S256, H277, S279, S282, and R285 together coordinate dsDNA. Uracil is bound at residue H277. K295 bears the N6-acetyllysine mark.

This sequence belongs to the uracil-DNA glycosylase (UDG) superfamily. UNG family. As to quaternary structure, monomer. In terms of assembly, interacts with RPA2 subunit of the RPA trimer; this interaction mediates UNG2 recruitment to RPA-coated single-stranded DNA at stalled replication forks. Interacts with PCNA; this interaction mediates UNG2 recruitment to S-phase replication foci. Interacts (via N-terminus) with FAM72A. (Microbial infection) Interacts with HIV-1 Vpr. Processed by mitochondrial serine or cysteine peptidases to yield a mature dominant form that lacks N-terminal 29 amino acid residues and another minor form that lacks N-terminal 77 amino acid residues. The catalytic activity of UNG1 delta29 is not product-inhibited by AP sites.

It is found in the mitochondrion. The protein localises to the nucleus. The enzyme catalyses Hydrolyzes single-stranded DNA or mismatched double-stranded DNA and polynucleotides, releasing free uracil.. It carries out the reaction a 2'-deoxyuridine in single-stranded DNA + H2O = a 2'-deoxyribose 5'-monophosphate in single-stranded DNA + uracil. It catalyses the reaction a 2'-deoxyuridine in double-stranded DNA + H2O = a 2'-deoxyribose 5'-monophosphate in double-stranded DNA + uracil. Uracil-DNA glycosylase that hydrolyzes the N-glycosidic bond between uracil and deoxyribose in single- and double-stranded DNA (ssDNA and dsDNA) to release a free uracil residue and form an abasic (apurinic/apyrimidinic; AP) site. Excises uracil residues arising as a result of misincorporation of dUMP residues by DNA polymerase during replication or due to spontaneous or enzymatic deamination of cytosine. Mediates error-free base excision repair (BER) of uracil at replication forks. According to the model, it is recruited by PCNA to S-phase replication forks to remove misincorporated uracil at U:A base mispairs in nascent DNA strands. Via trimeric RPA it is recruited to ssDNA stretches ahead of the polymerase to allow detection and excision of deaminated cytosines prior to replication. The resultant AP sites temporarily stall replication, allowing time to repair the lesion. Mediates mutagenic uracil processing involved in antibody affinity maturation. Processes AICDA-induced U:G base mispairs at variable immunoglobulin (Ig) regions leading to the generation of transversion mutations. Operates at switch sites of Ig constant regions where it mediates Ig isotype class switch recombination. Excises AICDA-induced uracil residues forming AP sites that are subsequently nicked by APEX1 endonuclease. The accumulation of staggered nicks in opposite strands results in double strand DNA breaks that are finally resolved via non-homologous end joining repair pathway. This is Uracil-DNA glycosylase from Homo sapiens (Human).